Here is a 569-residue protein sequence, read N- to C-terminus: Interleukin-1 receptor type 1 (569 aa).

Residues 1-17 (MKVLLRLICFIALLISS) form the signal peptide. Over 18–336 (LEADKCKERE…LIYPVTNFQK (319 aa)) the chain is Extracellular. 4 disulfides stabilise this stretch: Cys-23–Cys-104, Cys-44–Cys-96, Cys-121–Cys-164, and Cys-142–Cys-196. Ig-like C2-type domains lie at 23–110 (CKER…IKIS), 118–210 (PNLC…YPIT), and 226–328 (PVIV…IQLI). Asn-100 carries N-linked (GlcNAc...) asparagine glycosylation. N-linked (GlcNAc...) asparagine glycans are attached at residues Asn-193, Asn-233, Asn-249, Asn-263, and Asn-297. Cys-248 and Cys-312 are oxidised to a cystine. A helical transmembrane segment spans residues 337 to 356 (HMIGICVTLTVIIVCSVFIY). Residues 357–569 (KIFKIDIVLW…LQREAHVPLG (213 aa)) lie on the Cytoplasmic side of the membrane. A TIR domain is found at 383 to 538 (KTYDAYILYP…RFWKNVRYHM (156 aa)). Glu-470 is a catalytic residue. Residue Tyr-496 is modified to Phosphotyrosine. The tract at residues 540 to 569 (VQRRSPSSKHQLLSPATKEKLQREAHVPLG) is disordered. Basic and acidic residues predominate over residues 556–569 (TKEKLQREAHVPLG).

The protein belongs to the interleukin-1 receptor family. As to quaternary structure, the interleukin-1 receptor complex is a heterodimer of IL1R1 and IL1RAP. Interacts with PIK3R1. Interacts with IL1A. A soluble form (sIL1R1) is probably produced by proteolytic cleavage at the cell surface (shedding). In terms of processing, rapidly phosphorylated on Tyr-496 in response to IL-1, which creates a SH2 binding site for the PI 3-kinase regulatory subunit PIK3R1. As to expression, expressed in T-helper cell subsets. Preferentially expressed in T-helper 1 (Th1) cells.

The protein localises to the membrane. It localises to the cell membrane. Its subcellular location is the secreted. The enzyme catalyses NAD(+) + H2O = ADP-D-ribose + nicotinamide + H(+). Its function is as follows. Receptor for IL1A, IL1B and IL1RN. After binding to interleukin-1 associates with the coreceptor IL1RAP to form the high affinity interleukin-1 receptor complex which mediates interleukin-1-dependent activation of NF-kappa-B, MAPK and other pathways. Signaling involves the recruitment of adapter molecules such as TOLLIP, MYD88, and IRAK1 or IRAK2 via the respective TIR domains of the receptor/coreceptor subunits. Binds ligands with comparable affinity and binding of antagonist IL1RN prevents association with IL1RAP to form a signaling complex. Involved in IL1B-mediated costimulation of IFNG production from T-helper 1 (Th1) cells. This is Interleukin-1 receptor type 1 (IL1R1) from Homo sapiens (Human).